A 269-amino-acid chain; its full sequence is Ribonuclease HII (269 aa).

Residues 83-269 (YLIAGVDEVG…HRMSFLTNIL (187 aa)) form the RNase H type-2 domain. 3 residues coordinate a divalent metal cation: Asp89, Glu90, and Asp185.

It belongs to the RNase HII family. The cofactor is Mn(2+). Mg(2+) is required as a cofactor.

The protein resides in the cytoplasm. The catalysed reaction is Endonucleolytic cleavage to 5'-phosphomonoester.. In terms of biological role, endonuclease that specifically degrades the RNA of RNA-DNA hybrids. This chain is Ribonuclease HII, found in Clostridium botulinum (strain Loch Maree / Type A3).